The following is a 556-amino-acid chain: Protein F37C4.5 (556 aa).

Ala2 carries the post-translational modification N-acetylalanine.

In Caenorhabditis elegans, this protein is Protein F37C4.5.